A 352-amino-acid chain; its full sequence is Protein RecA (352 aa).

67–74 (GPESSGKT) serves as a coordination point for ATP.

It belongs to the RecA family.

It localises to the cytoplasm. Can catalyze the hydrolysis of ATP in the presence of single-stranded DNA, the ATP-dependent uptake of single-stranded DNA by duplex DNA, and the ATP-dependent hybridization of homologous single-stranded DNAs. It interacts with LexA causing its activation and leading to its autocatalytic cleavage. The sequence is that of Protein RecA from Enterobacter sp. (strain 638).